A 138-amino-acid chain; its full sequence is MAKPLPRIGSRKNRHMGSRKNVRRIPKGVIHVQASFNNTIVTVTDVRGRVISWSSAGTCGFKGTKRGTPFAAQTAAGNAIRTVVDQGMQRAEVMIKGPGLGRDAALRAIRRSGILLSFIRDVTPMPHNGCRPPKKRRV.

This sequence belongs to the universal ribosomal protein uS11 family. In terms of assembly, part of the 30S ribosomal subunit.

It localises to the plastid. Its subcellular location is the chloroplast. In Morus indica (Mulberry), this protein is Small ribosomal subunit protein uS11c.